A 1651-amino-acid polypeptide reads, in one-letter code: A.superbus venom factor 2 (1651 aa).

The first 22 residues, 1-22, serve as a signal peptide directing secretion; that stretch reads MEGMALYLVAALLIGFPGSSHG. Asn189 carries N-linked (GlcNAc...) asparagine glycosylation. Residues Pro519, Asp542, Val543, and Asp545 each coordinate Mg(2+). 12 disulfide bridges follow: Cys547/Cys808, Cys616/Cys651, Cys684/Cys711, Cys685/Cys718, Cys698/Cys719, Cys864/Cys1501, Cys1346/Cys1477, Cys1377/Cys1446, Cys1494/Cys1499, Cys1506/Cys1578, Cys1525/Cys1649, and Cys1625/Cys1634. Positions 657–739 are excised as a propeptide; the sequence is RRRRSSVLLL…QRESELFLAR (83 aa). The interval 661 to 739 is C3a-like domain; that stretch reads SSVLLLDSKA…QRESELFLAR (79 aa). Positions 684-719 constitute an Anaphylatoxin-like domain; it reads CCEDGMHENPMGYTCEKRAKYTQEGDACKAAFLECC. The tract at residues 743–754 is factor B binding site; the sequence is EDEFFEEDNIIS. A propeptide spanning residues 992–1269 is cleaved from the precursor; that stretch reads HLIITPSGSG…VMVFQALAEY (278 aa). Residues 992-1269 are C3d-like domain; the sequence is HLIITPSGSG…VMVFQALAEY (278 aa). The tract at residues 1197–1259 is factor H binding site; sequence VLMAASTGRD…GGTYGQTQAT (63 aa). N-linked (GlcNAc...) asparagine glycans are attached at residues Asn1282 and Asn1352. The NTR domain occupies 1506–1649; the sequence is CSLLNQQKKI…LSNTLTIFGC (144 aa).

This sequence belongs to the venom complement C3 homolog family. In terms of assembly, heterotrimer of alpha, beta and gamma chains; disulfide-linked. Is active with factor B in the presence of factor D. In terms of processing, first processed by the removal of 4 Arg residues by furin-type protease, forming two chains, alpha and gamma/beta precursor, linked by a disulfide bond. This mature AVF is composed of three chains: alpha, gamma and beta. In terms of tissue distribution, expressed by the venom gland.

Its subcellular location is the secreted. In terms of biological role, complement-activating protein in snake venom. It is a structural and functional analog of complement component C3b, the activated form of C3. It binds factor B (CFB), which is subsequently cleaved by factor D (CFD) to form the bimolecular complex AVF/Bb. AVF/Bb is a C3 convertase that cleaves complement component C3, but not C5 (as do CVF/Bb). This chain is A.superbus venom factor 2, found in Austrelaps superbus (Lowland copperhead snake).